We begin with the raw amino-acid sequence, 424 residues long: Enolase (424 aa).

Residue Q165 participates in (2R)-2-phosphoglycerate binding. E207 functions as the Proton donor in the catalytic mechanism. Residues D244, E283, and D310 each contribute to the Mg(2+) site. 4 residues coordinate (2R)-2-phosphoglycerate: K335, R364, S365, and K386. The Proton acceptor role is filled by K335.

It belongs to the enolase family. Requires Mg(2+) as cofactor.

It localises to the cytoplasm. The protein localises to the secreted. The protein resides in the cell surface. The enzyme catalyses (2R)-2-phosphoglycerate = phosphoenolpyruvate + H2O. Its pathway is carbohydrate degradation; glycolysis; pyruvate from D-glyceraldehyde 3-phosphate: step 4/5. Its function is as follows. Catalyzes the reversible conversion of 2-phosphoglycerate (2-PG) into phosphoenolpyruvate (PEP). It is essential for the degradation of carbohydrates via glycolysis. In Chlamydia trachomatis serovar L2 (strain ATCC VR-902B / DSM 19102 / 434/Bu), this protein is Enolase.